Here is a 746-residue protein sequence, read N- to C-terminus: Protein zyg-11 homolog (746 aa).

3 LRR repeats span residues Leu-185–Ser-209, Met-216–His-241, and Leu-265–Glu-289.

The protein belongs to the zyg-11 family.

In terms of biological role, serves as substrate adapter subunit in an E3 ubiquitin ligase complex zyg11-cul2-elongin BC. Targets substrates bearing N-terminal glycine degrons for proteasomal degradation. This is Protein zyg-11 homolog (zyg11) from Danio rerio (Zebrafish).